We begin with the raw amino-acid sequence, 141 residues long: Large ribosomal subunit protein uL11A (141 aa).

Belongs to the universal ribosomal protein uL11 family. In terms of assembly, part of the ribosomal stalk of the 50S ribosomal subunit. Interacts with L10 and the large rRNA to form the base of the stalk. L10 forms an elongated spine to which L12 dimers bind in a sequential fashion forming a multimeric L10(L12)X complex. One or more lysine residues are methylated.

Functionally, forms part of the ribosomal stalk which helps the ribosome interact with GTP-bound translation factors. This chain is Large ribosomal subunit protein uL11A, found in Bacillus cereus (strain ATCC 14579 / DSM 31 / CCUG 7414 / JCM 2152 / NBRC 15305 / NCIMB 9373 / NCTC 2599 / NRRL B-3711).